A 597-amino-acid chain; its full sequence is MPNNDILRPLAIPAKYVGSFLVFLYNGLYFVFVVNLWSRLFGKATKTEVPPLPKIRKLGKDMASRAPPRRGQSSEDNEDGLPAEIFNVRRHHKQAYAYIARALEVDEGQGSLETKKRAVEFYNRGIEEMEAGLLIPCIDEGEEWDKARRLQEKMEANLENTRERMDELVIIFFIIVVALLVSAGMMDDQPLLSARKTSSEPSQAWDVSKPTGPSYKQSKSYKNSTTVTTKRSQASPSFSSSSSSVNSTAGSSRTKPAKPAPMAAPRRYNPQVRRTKSTKPAMMAKQSCVDEQKKKISHLKGIDPKLANIIMDEILESGPAVHFSDIAGVDNAKKALQEIVILPSLRPELWRGDPTLVLFQVLPYPPGSSHITLPRASTATSFTSCFFSISKRSSLVHPVVASFFVKSLEDLASILTTSLFTIDEVDSLLTERREGEHEHSRRLKTEFLVSFDGVVADPEERILVMGATNRPQELDDAALRRMVKRIHIPLPDKETRKVLLTKLLAKHHNPLSGAEIDRLARMTEHYSGSDLTALARDAALGPIRDLNSDQLKSMAANEVRNITFQDFVNSLQIIRPSVGPETLKAYDDWNRLYGSNA.

Topologically, residues 1 to 20 (MPNNDILRPLAIPAKYVGSF) are cytoplasmic. The segment at residues 21–37 (LVFLYNGLYFVFVVNLW) is an intramembrane region (helical). Residues 38–597 (SRLFGKATKT…DWNRLYGSNA (560 aa)) are Cytoplasmic-facing. Positions 56 to 80 (RKLGKDMASRAPPRRGQSSEDNEDG) are disordered. Residues 91–168 (HHKQAYAYIA…ENTRERMDEL (78 aa)) form the MIT domain. Residues 193–289 (SARKTSSEPS…PAMMAKQSCV (97 aa)) form a disordered region. The segment covering 214-231 (SYKQSKSYKNSTTVTTKR) has biased composition (polar residues). Low complexity predominate over residues 232–252 (SQASPSFSSSSSSVNSTAGSS).

Belongs to the AAA ATPase family. Spastin subfamily. Homohexamer. The homohexamer is stabilized by ATP-binding. The homohexamer may adopt a ring conformation through which microtubules pass prior to being severed. Interacts with microtubules.

It localises to the membrane. Its subcellular location is the cytoplasm. The protein localises to the cytoskeleton. The protein resides in the microtubule organizing center. It is found in the centrosome. The catalysed reaction is n ATP + n H2O + a microtubule = n ADP + n phosphate + (n+1) alpha/beta tubulin heterodimers.. Its function is as follows. ATP-dependent microtubule severing protein. Microtubule severing may promote reorganization of cellular microtubule arrays and the release of microtubules from the microtubule organizing center following nucleation. This Nematostella vectensis (Starlet sea anemone) protein is Spastin.